Here is a 244-residue protein sequence, read N- to C-terminus: Small ribosomal subunit protein uS3 (244 aa).

Residues 39-110 (IRNFIQKKYS…QVRINVVEVE (72 aa)) enclose the KH type-2 domain. A disordered region spans residues 221 to 244 (GAIPRRKGSRKPQQFEDRSSNENS). A compositionally biased stretch (basic and acidic residues) spans 233–244 (QQFEDRSSNENS).

It belongs to the universal ribosomal protein uS3 family. In terms of assembly, part of the 30S ribosomal subunit. Forms a tight complex with proteins S10 and S14.

Binds the lower part of the 30S subunit head. Binds mRNA in the 70S ribosome, positioning it for translation. This is Small ribosomal subunit protein uS3 from Prochlorococcus marinus (strain MIT 9515).